A 184-amino-acid polypeptide reads, in one-letter code: Inosine triphosphate pyrophosphatase (184 aa).

ITP is bound at residue 10–15 (TGNANK). Mg(2+) is bound at residue Glu38. Residues Lys50, 66 to 67 (DT), Lys83, 142 to 145 (FGWD), Lys163, and 168 to 169 (HR) each bind ITP.

It belongs to the HAM1 NTPase family. Homodimer. It depends on Mg(2+) as a cofactor. Mn(2+) serves as cofactor.

Its subcellular location is the cytoplasm. The protein resides in the nucleus. The enzyme catalyses ITP + H2O = IMP + diphosphate + H(+). The catalysed reaction is dITP + H2O = dIMP + diphosphate + H(+). It catalyses the reaction XTP + H2O = XMP + diphosphate + H(+). Functionally, pyrophosphatase that hydrolyzes non-canonical purine nucleotides such as inosine triphosphate (ITP), deoxyinosine triphosphate (dITP) or xanthosine 5'-triphosphate (XTP) to their respective monophosphate derivatives. The enzyme does not distinguish between the deoxy- and ribose forms. Probably excludes non-canonical purines from RNA and DNA precursor pools, thus preventing their incorporation into RNA and DNA and avoiding chromosomal lesions. This Fusarium vanettenii (strain ATCC MYA-4622 / CBS 123669 / FGSC 9596 / NRRL 45880 / 77-13-4) (Fusarium solani subsp. pisi) protein is Inosine triphosphate pyrophosphatase.